The sequence spans 456 residues: tRNA modification GTPase MnmE (456 aa).

Residues Arg-21, Glu-85, and Lys-124 each coordinate (6S)-5-formyl-5,6,7,8-tetrahydrofolate. Positions 220–379 constitute a TrmE-type G domain; it reads QFRIVLYGEP…LLDAIKERTG (160 aa). A K(+)-binding site is contributed by Asn-230. GTP-binding positions include 230–235, 249–255, and 274–277; these read NTGKSS, SEIPGTT, and DTAG. Residue Ser-234 participates in Mg(2+) binding. Positions 249, 251, and 254 each coordinate K(+). Mg(2+) is bound at residue Thr-255. (6S)-5-formyl-5,6,7,8-tetrahydrofolate is bound at residue Lys-456.

It belongs to the TRAFAC class TrmE-Era-EngA-EngB-Septin-like GTPase superfamily. TrmE GTPase family. Homodimer. Heterotetramer of two MnmE and two MnmG subunits. K(+) serves as cofactor.

It is found in the cytoplasm. In terms of biological role, exhibits a very high intrinsic GTPase hydrolysis rate. Involved in the addition of a carboxymethylaminomethyl (cmnm) group at the wobble position (U34) of certain tRNAs, forming tRNA-cmnm(5)s(2)U34. The sequence is that of tRNA modification GTPase MnmE from Leptospira interrogans serogroup Icterohaemorrhagiae serovar copenhageni (strain Fiocruz L1-130).